The sequence spans 793 residues: Probable phosphoketolase 2 (793 aa).

It belongs to the XFP family. Thiamine diphosphate is required as a cofactor.

In Nostoc sp. (strain PCC 7120 / SAG 25.82 / UTEX 2576), this protein is Probable phosphoketolase 2.